A 72-amino-acid polypeptide reads, in one-letter code: NAD(P)H-quinone oxidoreductase subunit O (72 aa).

Belongs to the complex I NdhO subunit family. As to quaternary structure, NDH-1 can be composed of about 15 different subunits; different subcomplexes with different compositions have been identified which probably have different functions.

It localises to the cellular thylakoid membrane. The enzyme catalyses a plastoquinone + NADH + (n+1) H(+)(in) = a plastoquinol + NAD(+) + n H(+)(out). It catalyses the reaction a plastoquinone + NADPH + (n+1) H(+)(in) = a plastoquinol + NADP(+) + n H(+)(out). Functionally, NDH-1 shuttles electrons from an unknown electron donor, via FMN and iron-sulfur (Fe-S) centers, to quinones in the respiratory and/or the photosynthetic chain. The immediate electron acceptor for the enzyme in this species is believed to be plastoquinone. Couples the redox reaction to proton translocation, and thus conserves the redox energy in a proton gradient. Cyanobacterial NDH-1 also plays a role in inorganic carbon-concentration. This Rippkaea orientalis (strain PCC 8801 / RF-1) (Cyanothece sp. (strain PCC 8801)) protein is NAD(P)H-quinone oxidoreductase subunit O.